Here is a 366-residue protein sequence, read N- to C-terminus: Spermidine/putrescine import ATP-binding protein PotA (366 aa).

The 232-residue stretch at 8 to 239 (IRFENVTKQF…PINKFVADFI (232 aa)) folds into the ABC transporter domain. 41 to 48 (GPSGCGKT) contacts ATP.

Belongs to the ABC transporter superfamily. Spermidine/putrescine importer (TC 3.A.1.11.1) family. The complex is composed of two ATP-binding proteins (PotA), two transmembrane proteins (PotB and PotC) and a solute-binding protein (PotD).

The protein localises to the cell membrane. It carries out the reaction ATP + H2O + polyamine-[polyamine-binding protein]Side 1 = ADP + phosphate + polyamineSide 2 + [polyamine-binding protein]Side 1.. Part of the ABC transporter complex PotABCD involved in spermidine/putrescine import. Responsible for energy coupling to the transport system. The protein is Spermidine/putrescine import ATP-binding protein PotA of Listeria innocua serovar 6a (strain ATCC BAA-680 / CLIP 11262).